A 65-amino-acid polypeptide reads, in one-letter code: Large ribosomal subunit protein uL29 (65 aa).

It belongs to the universal ribosomal protein uL29 family.

This is Large ribosomal subunit protein uL29 from Paracidovorax citrulli (strain AAC00-1) (Acidovorax citrulli).